The primary structure comprises 280 residues: 2-dehydro-3-deoxyphosphooctonate aldolase (280 aa).

It belongs to the KdsA family.

The protein resides in the cytoplasm. The enzyme catalyses D-arabinose 5-phosphate + phosphoenolpyruvate + H2O = 3-deoxy-alpha-D-manno-2-octulosonate-8-phosphate + phosphate. It functions in the pathway carbohydrate biosynthesis; 3-deoxy-D-manno-octulosonate biosynthesis; 3-deoxy-D-manno-octulosonate from D-ribulose 5-phosphate: step 2/3. Its pathway is bacterial outer membrane biogenesis; lipopolysaccharide biosynthesis. This is 2-dehydro-3-deoxyphosphooctonate aldolase from Coxiella burnetii (strain CbuG_Q212) (Coxiella burnetii (strain Q212)).